The primary structure comprises 971 residues: Oncostatin-M-specific receptor subunit beta (971 aa).

Positions 1–23 (MAFSVVLHPAFLLAVLSLRASRS) are cleaved as a signal peptide. Over 24 to 737 (EVLEEPLPLT…VTTPDARSHM (714 aa)) the chain is Extracellular. N-linked (GlcNAc...) asparagine glycosylation is found at Asn-74, Asn-97, Asn-130, Asn-162, and Asn-239. Cysteines 242 and 252 form a disulfide. N-linked (GlcNAc...) asparagine glycans are attached at residues Asn-271, Asn-304, Asn-323, and Asn-377. 4 Fibronectin type-III domains span residues 332 to 425 (APQD…TPET), 427 to 523 (PSQA…SNDS), 524 to 620 (GHEE…TQEL), and 622 to 733 (PLVN…TPDA). A WSXWS motif motif is present at residues 412 to 416 (WSDWT). Asn-491, Asn-541, Asn-577, Asn-689, and Asn-722 each carry an N-linked (GlcNAc...) asparagine glycan. The helical transmembrane segment at 738–758 (LLQIILPMTLCVLLSIIVCYW) threads the bilayer. Over 759 to 971 (KSQWVKEKCY…STVLLGQGEQ (213 aa)) the chain is Cytoplasmic. Residues 767–775 (CYPDIPNPY) carry the Box 1 motif motif. Residues 949-971 (LASPSLKEDNSLTSTVLLGQGEQ) form a disordered region. Polar residues predominate over residues 959–971 (SLTSTVLLGQGEQ).

The protein belongs to the type I cytokine receptor family. Type 2 subfamily. As to quaternary structure, heterodimer composed of OSMR and IL6ST (type II OSM receptor). Heterodimer with IL31RA to form the IL31 receptor. As to expression, widely expressed. Expressed at highest levels in the lung, heart, thymus and spleen. Expressed in dorsal root ganglia.

It is found in the membrane. Functionally, associates with IL31RA to form the IL31 receptor. Binds IL31 to activate STAT3 and possibly STAT1 and STAT5. Capable of transducing OSM-specific signaling events. The polypeptide is Oncostatin-M-specific receptor subunit beta (Osmr) (Mus musculus (Mouse)).